The sequence spans 398 residues: Neuroplastin (398 aa).

A signal peptide spans 1–28 (MSGSSLPSALALSLLLVSGSLLPGPGAA). Ig-like domains lie at 29–134 (QNAG…PSIT), 148–235 (PRIV…IEVK), and 238–329 (PDIT…SVVT). Residues 29–339 (QNAGFVKSPM…VLRVRSHLAP (311 aa)) are Extracellular-facing. C52 and C116 are joined by a disulfide. Residues 149 to 161 (RIVTSEEVIIRDS) form a narpin; mediates binding with FGFR1 and has antidepressant-like activity region. Cysteines 170 and 218 form a disulfide. N-linked (GlcNAc...) asparagine glycans are attached at residues N171, N197, N229, N284, N296, and N317. Cysteines 259 and 316 form a disulfide. The helical transmembrane segment at 340–360 (LWPFLGILAEIIILVVIIVVY) threads the bilayer. At 361–398 (EKRKRPDEVPDDDEPAGPMKTNSTNNHKDKNLRQRNTN) the chain is on the cytoplasmic side. Residues 365-398 (RPDEVPDDDEPAGPMKTNSTNNHKDKNLRQRNTN) form a disordered region.

As to quaternary structure, interacts with ATP2B1; this interaction stabilizes ATP2B1 and increases ATPase activity; this interaction controls T cell calcium homeostasis following T cell activation. Interacts with XKR8; promoting its localization at the cell membrane. As to expression, isoform 1 is ubiquitously expressed. Isoform 2 is expressed in brain cortex and cerebellum (at protein level).

The protein localises to the cell membrane. It localises to the postsynaptic density. In terms of biological role, probable homophilic and heterophilic cell adhesion molecule involved in long term potentiation at hippocampal excitatory synapses through activation of p38MAPK. May also regulate neurite outgrowth by activating the FGFR1 signaling pathway. May play a role in synaptic plasticity. Also acts as a chaperone for ATP2B1; stabilizes ATP2B1 and increases its ATPase activity. Promotes localization of XKR8 at the cell membrane. This chain is Neuroplastin (NPTN), found in Homo sapiens (Human).